Consider the following 249-residue polypeptide: Probable transcriptional regulatory protein OTT_1378 (249 aa).

This sequence belongs to the TACO1 family.

It is found in the cytoplasm. The chain is Probable transcriptional regulatory protein OTT_1378 from Orientia tsutsugamushi (strain Ikeda) (Rickettsia tsutsugamushi).